The following is a 383-amino-acid chain: tRNA-specific 2-thiouridylase MnmA (383 aa).

ATP-binding positions include 31–38 and leucine 57; that span reads GLSGGVDS. The Nucleophile role is filled by cysteine 118. Cysteine 118 and cysteine 217 are disulfide-bonded. Residue glycine 143 coordinates ATP. The segment at 167–169 is interaction with tRNA; the sequence is KDQ. The active-site Cysteine persulfide intermediate is the cysteine 217. An interaction with tRNA region spans residues 322 to 323; the sequence is RY.

It belongs to the MnmA/TRMU family.

Its subcellular location is the cytoplasm. It carries out the reaction S-sulfanyl-L-cysteinyl-[protein] + uridine(34) in tRNA + AH2 + ATP = 2-thiouridine(34) in tRNA + L-cysteinyl-[protein] + A + AMP + diphosphate + H(+). Its function is as follows. Catalyzes the 2-thiolation of uridine at the wobble position (U34) of tRNA, leading to the formation of s(2)U34. This Synechococcus sp. (strain RCC307) protein is tRNA-specific 2-thiouridylase MnmA.